The sequence spans 434 residues: 4-hydroxy-3-methylbut-2-en-1-yl diphosphate synthase (flavodoxin) (434 aa).

A compositionally biased stretch (polar residues) spans 1–15; that stretch reads MQSEAQSPRSSQICS. A disordered region spans residues 1–20; sequence MQSEAQSPRSSQICSTEPVF. [4Fe-4S] cluster-binding residues include Cys322, Cys325, Cys368, and Glu375.

Belongs to the IspG family. [4Fe-4S] cluster serves as cofactor.

The catalysed reaction is (2E)-4-hydroxy-3-methylbut-2-enyl diphosphate + oxidized [flavodoxin] + H2O + 2 H(+) = 2-C-methyl-D-erythritol 2,4-cyclic diphosphate + reduced [flavodoxin]. It functions in the pathway isoprenoid biosynthesis; isopentenyl diphosphate biosynthesis via DXP pathway; isopentenyl diphosphate from 1-deoxy-D-xylulose 5-phosphate: step 5/6. Converts 2C-methyl-D-erythritol 2,4-cyclodiphosphate (ME-2,4cPP) into 1-hydroxy-2-methyl-2-(E)-butenyl 4-diphosphate. This is 4-hydroxy-3-methylbut-2-en-1-yl diphosphate synthase (flavodoxin) from Burkholderia mallei (strain ATCC 23344).